A 470-amino-acid polypeptide reads, in one-letter code: UDP-N-acetylmuramoylalanine--D-glutamate ligase (470 aa).

121 to 127 lines the ATP pocket; it reads GTNGKST.

Belongs to the MurCDEF family.

Its subcellular location is the cytoplasm. It carries out the reaction UDP-N-acetyl-alpha-D-muramoyl-L-alanine + D-glutamate + ATP = UDP-N-acetyl-alpha-D-muramoyl-L-alanyl-D-glutamate + ADP + phosphate + H(+). Its pathway is cell wall biogenesis; peptidoglycan biosynthesis. Cell wall formation. Catalyzes the addition of glutamate to the nucleotide precursor UDP-N-acetylmuramoyl-L-alanine (UMA). In Rhizobium etli (strain ATCC 51251 / DSM 11541 / JCM 21823 / NBRC 15573 / CFN 42), this protein is UDP-N-acetylmuramoylalanine--D-glutamate ligase.